Reading from the N-terminus, the 1366-residue chain is DNA-directed RNA polymerase subunit beta' (1366 aa).

Over residues 1–20 (MTSSKPKKTSRVRKTTKNSK) the composition is skewed to basic residues. Residues 1 to 33 (MTSSKPKKTSRVRKTTKNSKKNNPVTMPALAKT) form a disordered region. Zn(2+)-binding residues include C248, C315, C322, and C325. The interval 1291 to 1366 (YTVDMPQSPA…LQEEGLLSDE (76 aa)) is disordered. The span at 1354–1366 (LEGLQEEGLLSDE) shows a compositional bias: low complexity.

This sequence belongs to the RNA polymerase beta' chain family. RpoC2 subfamily. In cyanobacteria the RNAP catalytic core is composed of 2 alpha, 1 beta, 1 beta', 1 gamma and 1 omega subunit. When a sigma factor is associated with the core the holoenzyme is formed, which can initiate transcription. The cofactor is Zn(2+).

It carries out the reaction RNA(n) + a ribonucleoside 5'-triphosphate = RNA(n+1) + diphosphate. In terms of biological role, DNA-dependent RNA polymerase catalyzes the transcription of DNA into RNA using the four ribonucleoside triphosphates as substrates. This chain is DNA-directed RNA polymerase subunit beta', found in Prochlorococcus marinus (strain AS9601).